Here is a 387-residue protein sequence, read N- to C-terminus: Patatin group A-3 (387 aa).

Positions 1–23 (MATTKSFLILIVMILATTSSTFA) are cleaved as a signal peptide. Residues 32-230 (LSIDGGGVKG…TVADPALLSV (199 aa)) enclose the PNPLA domain. The short motif at 36–41 (GGGVKG) is the GXGXXG element. The short motif at 75–79 (GTSTG) is the GXSXG element. Residue Ser77 is the Nucleophile of the active site. An N-linked (GlcNAc...) asparagine glycan is attached at Asn115. Asp216 serves as the catalytic Proton acceptor. The DGA/G signature appears at 216 to 218 (DGA). Residues 361–385 (ETYEEALKRFAKLLSDRKKLRANKA) are a coiled coil.

Belongs to the patatin family. Tuber and stolon.

Its subcellular location is the vacuole. Probable lipolytic acyl hydrolase (LAH), an activity which is thought to be involved in the response of tubers to pathogens. This is Patatin group A-3 from Solanum tuberosum (Potato).